Consider the following 403-residue polypeptide: Phosphoglycerate kinase (403 aa).

Substrate-binding positions include 21–23 (DFN), arginine 37, 60–63 (HLGR), arginine 125, and arginine 158. Residues lysine 209, glutamate 332, and 359–362 (GGDS) each bind ATP.

It belongs to the phosphoglycerate kinase family. In terms of assembly, monomer.

It is found in the cytoplasm. The enzyme catalyses (2R)-3-phosphoglycerate + ATP = (2R)-3-phospho-glyceroyl phosphate + ADP. Its pathway is carbohydrate degradation; glycolysis; pyruvate from D-glyceraldehyde 3-phosphate: step 2/5. The protein is Phosphoglycerate kinase of Koribacter versatilis (strain Ellin345).